The primary structure comprises 159 residues: Cyclic pyranopterin monophosphate synthase (159 aa).

Residues 75 to 77 (LCH) and 113 to 114 (ME) contribute to the substrate site. Asp-128 is a catalytic residue.

It belongs to the MoaC family. Homohexamer; trimer of dimers.

It catalyses the reaction (8S)-3',8-cyclo-7,8-dihydroguanosine 5'-triphosphate = cyclic pyranopterin phosphate + diphosphate. It participates in cofactor biosynthesis; molybdopterin biosynthesis. In terms of biological role, catalyzes the conversion of (8S)-3',8-cyclo-7,8-dihydroguanosine 5'-triphosphate to cyclic pyranopterin monophosphate (cPMP). This is Cyclic pyranopterin monophosphate synthase from Yersinia pseudotuberculosis serotype O:3 (strain YPIII).